We begin with the raw amino-acid sequence, 85 residues long: MIKLFCVLAAFISINSACQSSHQQREEFTVATYHSSSICTTYCYSNCVVASQHKGLNVESYTCDKPDPYGRETVCKCTLIKCHDI.

An N-terminal signal peptide occupies residues 1–20 (MIKLFCVLAAFISINSACQS).

This is an uncharacterized protein from Invertebrate iridescent virus 6 (IIV-6).